We begin with the raw amino-acid sequence, 375 residues long: UDP-N-acetylglucosamine--N-acetylmuramyl-(pentapeptide) pyrophosphoryl-undecaprenol N-acetylglucosamine transferase (375 aa).

UDP-N-acetyl-alpha-D-glucosamine contacts are provided by residues 15–17 (TGG), asparagine 126, arginine 169, serine 197, and glutamine 298.

It belongs to the glycosyltransferase 28 family. MurG subfamily.

Its subcellular location is the cell inner membrane. It catalyses the reaction di-trans,octa-cis-undecaprenyl diphospho-N-acetyl-alpha-D-muramoyl-L-alanyl-D-glutamyl-meso-2,6-diaminopimeloyl-D-alanyl-D-alanine + UDP-N-acetyl-alpha-D-glucosamine = di-trans,octa-cis-undecaprenyl diphospho-[N-acetyl-alpha-D-glucosaminyl-(1-&gt;4)]-N-acetyl-alpha-D-muramoyl-L-alanyl-D-glutamyl-meso-2,6-diaminopimeloyl-D-alanyl-D-alanine + UDP + H(+). It participates in cell wall biogenesis; peptidoglycan biosynthesis. Functionally, cell wall formation. Catalyzes the transfer of a GlcNAc subunit on undecaprenyl-pyrophosphoryl-MurNAc-pentapeptide (lipid intermediate I) to form undecaprenyl-pyrophosphoryl-MurNAc-(pentapeptide)GlcNAc (lipid intermediate II). This is UDP-N-acetylglucosamine--N-acetylmuramyl-(pentapeptide) pyrophosphoryl-undecaprenol N-acetylglucosamine transferase from Rhodopseudomonas palustris (strain BisB18).